The chain runs to 279 residues: Large ribosomal subunit protein uL2 (279 aa).

Disordered regions lie at residues P29–K59 and V224–R279. The segment covering T50 to K59 has biased composition (basic residues). Positions P253 to I268 are enriched in basic and acidic residues. Over residues V269–R279 the composition is skewed to basic residues.

It belongs to the universal ribosomal protein uL2 family. Part of the 50S ribosomal subunit. Forms a bridge to the 30S subunit in the 70S ribosome.

Its function is as follows. One of the primary rRNA binding proteins. Required for association of the 30S and 50S subunits to form the 70S ribosome, for tRNA binding and peptide bond formation. It has been suggested to have peptidyltransferase activity; this is somewhat controversial. Makes several contacts with the 16S rRNA in the 70S ribosome. The sequence is that of Large ribosomal subunit protein uL2 from Paenarthrobacter aurescens (strain TC1).